We begin with the raw amino-acid sequence, 526 residues long: MFS-type transporter clz19 (526 aa).

Positions 1–49 are disordered; that stretch reads MNVDTTSPQAPLAGVESKQDGASNEATAKAESTTHDQNESSSFDERPVH. The segment covering 32 to 49 has biased composition (basic and acidic residues); the sequence is STTHDQNESSSFDERPVH. N38 is a glycosylation site (N-linked (GlcNAc...) asparagine). A helical membrane pass occupies residues 59-79; sequence ALLAVASFAAAISPASTTTYY. N-linked (GlcNAc...) asparagine glycosylation is present at N97. 3 helical membrane-spanning segments follow: residues 126 to 143, 186 to 206, and 214 to 234; these read VYLVSLSINMAANLGLAL, AYLTLGLVMGPALGPLIGGLL, and AIFWFLMILGGFFFLMVLTFF. N238 and N253 each carry an N-linked (GlcNAc...) asparagine glycan. Transmembrane regions (helical) follow at residues 294 to 314, 322 to 342, 384 to 404, 411 to 431, 446 to 466, and 473 to 493; these read FIVCMYGALLFGGYASVISIF, YGYSQVQVGLCYLPFGVGSIL, LTVSFPMIFATCGFVVAYGWL, VASVLVVVFLIANVFTGVLIA, ALGAAMNLTRCLMGAGGVAAV, and IGIGYTATATAGVWVVTLPAL.

Belongs to the major facilitator superfamily.

It is found in the membrane. In terms of biological role, MFS-type transporter; part of the gene cluster that mediates the biosynthesis of squalestatin S1 (SQS1, also known as zaragozic acid A), a heavily oxidized fungal polyketide that offers potent cholesterol lowering activity by targeting squalene synthase (SS). This Cochliobolus lunatus (Filamentous fungus) protein is MFS-type transporter clz19.